Consider the following 151-residue polypeptide: NADH-quinone oxidoreductase subunit I 2 (151 aa).

4Fe-4S ferredoxin-type domains are found at residues 49-82 and 93-122; these read PRLNINPDNGETLCISCNLCALACPENLIVVTSE and VTFTYDTSRCMFCGLCEDACPVDALELTQD. Residues Cys-62, Cys-65, Cys-68, Cys-72, Cys-102, Cys-105, Cys-108, and Cys-112 each contribute to the [4Fe-4S] cluster site.

The protein belongs to the complex I 23 kDa subunit family. NDH-1 is composed of 14 different subunits. Subunits NuoA, H, J, K, L, M, N constitute the membrane sector of the complex. Requires [4Fe-4S] cluster as cofactor.

The protein resides in the cell inner membrane. The enzyme catalyses a quinone + NADH + 5 H(+)(in) = a quinol + NAD(+) + 4 H(+)(out). In terms of biological role, NDH-1 shuttles electrons from NADH, via FMN and iron-sulfur (Fe-S) centers, to quinones in the respiratory chain. The immediate electron acceptor for the enzyme in this species is believed to be ubiquinone. Couples the redox reaction to proton translocation (for every two electrons transferred, four hydrogen ions are translocated across the cytoplasmic membrane), and thus conserves the redox energy in a proton gradient. The chain is NADH-quinone oxidoreductase subunit I 2 from Solibacter usitatus (strain Ellin6076).